Consider the following 155-residue polypeptide: MNVAFDLTPPSPSQREALIATLNAEEHRILLQHGTEAPFCNRLLDNNQLGTYTCRFCGLPLFHSNAKFKSGTGWPSFFEPYTHAHIRKQHDTSHGMIRTEILCARCNSHLGHLFPDGPPPTYERYCLNSVSLTFIPTGTLLPDQLHRGDNTAYRT.

The 123-residue stretch at 15-137 (REALIATLNA…NSVSLTFIPT (123 aa)) folds into the MsrB domain. Cys-54, Cys-57, Cys-103, and Cys-106 together coordinate Zn(2+). The active-site Nucleophile is Cys-126.

The protein belongs to the MsrB Met sulfoxide reductase family. Zn(2+) is required as a cofactor.

It catalyses the reaction L-methionyl-[protein] + [thioredoxin]-disulfide + H2O = L-methionyl-(R)-S-oxide-[protein] + [thioredoxin]-dithiol. The chain is Peptide methionine sulfoxide reductase MsrB from Xylella fastidiosa (strain 9a5c).